The sequence spans 617 residues: Formin-binding protein 1 (617 aa).

The required for self-association and induction of membrane tubulation stretch occupies residues 1–79 (MSWGTELWDQ…CKAFISNLNE (79 aa)). Residues 1-264 (MSWGTELWDQ…AAESIDQKND (264 aa)) form the F-BAR domain. Positions 1–335 (MSWGTELWDQ…KKNKLMSLLT (335 aa)) are interaction with microtubules. 2 positions are modified to N6-acetyllysine: lysine 66 and lysine 110. Positions 67-259 (YTSCKAFISN…DGIVKAAESI (193 aa)) form a coiled coil. Positions 251–617 (GIVKAAESID…VCLDKNAKDS (367 aa)) are required for self-association and induction of membrane tubulation. Disordered stretches follow at residues 280 to 315 (GDIE…KFGG) and 333 to 366 (LLTS…QKEP). Phosphoserine occurs at positions 296 and 299. Residues 338–347 (HQPPPPPPAS) show a composition bias toward pro residues. 2 positions are modified to phosphoserine: serine 349 and serine 359. The stretch at 398-490 (TPEDFSNLPP…EVEGRLPARS (93 aa)) forms a coiled coil. An interaction with RND2 region spans residues 400–552 (EDFSNLPPEQ…FDDEEPLPAI (153 aa)). Residues 404-481 (NLPPEQRRKK…TQKFEAWLAE (78 aa)) form the REM-1 domain. The tract at residues 486–531 (LPARSEQARRQSGLYDSQNPPTVNNCAQDRESPDGSYTEEQSQESE) is disordered. The segment at 495–617 (RQSGLYDSQN…VCLDKNAKDS (123 aa)) is interaction with PDE6G. Serine 497 is modified (phosphoserine). Polar residues predominate over residues 499–512 (LYDSQNPPTVNNCA). Tyrosine 500 carries the phosphotyrosine modification. Residues 514–617 (DRESPDGSYT…VCLDKNAKDS (104 aa)) form a required for interaction with TNKS region. Serine 521 is subject to Phosphoserine. The interval 535-617 (LATDFDDEFD…VCLDKNAKDS (83 aa)) is interaction with DNM1 and DNM3. Positions 550-611 (PAIGTCKALY…PTSYVEVCLD (62 aa)) constitute an SH3 domain. The interval 550–617 (PAIGTCKALY…VCLDKNAKDS (68 aa)) is interaction with ARHGAP17, DAAM1, DIAPH1 and DIAPH2. The interaction with DNM2 and WASL stretch occupies residues 553–609 (GTCKALYTFEGQNEGTISVVEGETLYVIEEDKGDGWTRIRRNEDEEGYVPTSYVEVC). Positions 553–610 (GTCKALYTFEGQNEGTISVVEGETLYVIEEDKGDGWTRIRRNEDEEGYVPTSYVEVCL) are interaction with FASLG.

This sequence belongs to the FNBP1 family. Interacts specifically with GTP-bound RND2 and CDC42. Interacts with PDE6G and microtubules. Homodimerizes, the dimers can polymerize end-to-end to form filamentous structures. Interacts with AKAP9, ARHGAP17, DAAM1, DIAPH1, DIAPH2, DNM1, DNM2, DNM3, FASLG/FASL, SNX2 and WASL/N-WASP. May interact with TNKS. Very highly expressed in the epithelial cells of the gastrointestinal tract, respiratory, reproductive and urinary systems. Also highly expressed in brown adipose tissue, cardiomyocytes, enteric ganglia and glucagon producing cells of the pancreas. Expressed in germ cells of the testis and all regions of the brain.

It localises to the cytoplasm. Its subcellular location is the cytoskeleton. The protein localises to the cell cortex. The protein resides in the lysosome. It is found in the cytoplasmic vesicle. It localises to the cell membrane. Its subcellular location is the membrane. The protein localises to the clathrin-coated pit. In terms of biological role, may act as a link between RND2 signaling and regulation of the actin cytoskeleton. Required to coordinate membrane tubulation with reorganization of the actin cytoskeleton during the late stage of clathrin-mediated endocytosis. Binds to lipids such as phosphatidylinositol 4,5-bisphosphate and phosphatidylserine and promotes membrane invagination and the formation of tubules. Also enhances actin polymerization via the recruitment of WASL/N-WASP, which in turn activates the Arp2/3 complex. Actin polymerization may promote the fission of membrane tubules to form endocytic vesicles. May be required for the lysosomal retention of FASLG/FASL. The polypeptide is Formin-binding protein 1 (FNBP1) (Homo sapiens (Human)).